We begin with the raw amino-acid sequence, 315 residues long: PIH1 domain-containing protein 2 (315 aa).

This sequence belongs to the PIH1 family.

In Mus musculus (Mouse), this protein is PIH1 domain-containing protein 2 (Pih1d2).